The chain runs to 304 residues: Ribonuclease Z (304 aa).

Zn(2+) contacts are provided by histidine 63, histidine 65, aspartate 67, histidine 68, histidine 143, aspartate 213, and histidine 271. Catalysis depends on aspartate 67, which acts as the Proton acceptor.

The protein belongs to the RNase Z family. In terms of assembly, homodimer. Zn(2+) serves as cofactor.

It catalyses the reaction Endonucleolytic cleavage of RNA, removing extra 3' nucleotides from tRNA precursor, generating 3' termini of tRNAs. A 3'-hydroxy group is left at the tRNA terminus and a 5'-phosphoryl group is left at the trailer molecule.. Functionally, zinc phosphodiesterase, which displays some tRNA 3'-processing endonuclease activity. Probably involved in tRNA maturation, by removing a 3'-trailer from precursor tRNA. This is Ribonuclease Z from Parabacteroides distasonis (strain ATCC 8503 / DSM 20701 / CIP 104284 / JCM 5825 / NCTC 11152).